We begin with the raw amino-acid sequence, 431 residues long: Acrosin (431 aa).

Positions 1-16 are cleaved as a signal peptide; that stretch reads MLPTAVLLVLVVSVVA. A glycan (N-linked (GlcNAc...) asparagine) is linked at Asn19. Cystine bridges form between Cys22/Cys152, Cys26/Cys160, Cys71/Cys87, Cys175/Cys244, Cys207/Cys223, and Cys234/Cys264. Positions 40–288 constitute a Peptidase S1 domain; the sequence is VVGGQAAQQG…FLDWIASRIG (249 aa). Catalysis depends on charge relay system residues His86 and Asp140. A glycan (N-linked (GlcNAc...) asparagine) is linked at Asn208. The Charge relay system role is filled by Ser238. The interval 295–385 is disordered; sequence IQPATPTPPT…PPPASTKPPQ (91 aa). The span at 331 to 341 shows a compositional bias: basic residues; the sequence is PHPHPHPHPHP. The span at 342 to 381 shows a compositional bias: pro residues; the sequence is RPPQPPAAQAPPPPPPPPPPPPPPPPPPPPPPPPPPPAST. Positions 351–431 are cleaved as a propeptide — pro-rich; the sequence is APPPPPPPPP…TEIPEVTLAS (81 aa).

The protein belongs to the peptidase S1 family. In terms of assembly, heavy chain (catalytic) and a light chain linked by two disulfide bonds. Forms a heterodimer with SERPINA5.

It carries out the reaction Preferential cleavage: Arg-|-Xaa, Lys-|-Xaa.. Its activity is regulated as follows. Inhibited by SERPINA5. Its function is as follows. Acrosin is the major protease of mammalian spermatozoa. It is a serine protease of trypsin-like cleavage specificity, it is synthesized in a zymogen form, proacrosin and stored in the acrosome. The sequence is that of Acrosin (ACR) from Oryctolagus cuniculus (Rabbit).